A 623-amino-acid chain; its full sequence is Chaperone protein HtpG (623 aa).

Residues 1 to 341 (MEKREFKAES…SQDLSLNISR (341 aa)) form an a; substrate-binding region. Positions 342 to 549 (EMLQHDRQLS…EGEVSIEMEK (208 aa)) are b. The tract at residues 550–623 (ILSAMPNNQG…FTNDICKLMK (74 aa)) is c.

The protein belongs to the heat shock protein 90 family. Homodimer.

It localises to the cytoplasm. Its function is as follows. Molecular chaperone. Has ATPase activity. This is Chaperone protein HtpG from Clostridium perfringens (strain ATCC 13124 / DSM 756 / JCM 1290 / NCIMB 6125 / NCTC 8237 / Type A).